A 70-amino-acid chain; its full sequence is UPF0434 protein MCA0634 (70 aa).

This sequence belongs to the UPF0434 family.

The protein is UPF0434 protein MCA0634 of Methylococcus capsulatus (strain ATCC 33009 / NCIMB 11132 / Bath).